Reading from the N-terminus, the 479-residue chain is Ankyrin repeat, SAM and basic leucine zipper domain-containing protein 1 (479 aa).

2 positions are modified to phosphoserine: S22 and S24. ANK repeat units lie at residues 49–78 (EKNE…SVDS), 82–111 (YGWT…NASF), 114–148 (DKQT…DPNV), 152–181 (RLMT…EVNT), 185–214 (NGYT…NKML), and 218–247 (DGKT…PLEG). The 63-residue stretch at 276-338 (SYTALGDLEI…KILDALKELQ (63 aa)) folds into the SAM domain.

In terms of assembly, interacts with DDX4, PIWIL1, RANBP9 and TDRD1.

The protein resides in the cytoplasm. In terms of biological role, plays a central role during spermatogenesis by repressing transposable elements and preventing their mobilization, which is essential for the germline integrity. Acts via the piRNA metabolic process, which mediates the repression of transposable elements during meiosis by forming complexes composed of piRNAs and Piwi proteins and governs the methylation and subsequent repression of transposons. Its association with pi-bodies suggests a participation in the primary piRNAs metabolic process. Required prior to the pachytene stage to facilitate the production of multiple types of piRNAs, including those associated with repeats involved in the regulation of retrotransposons. May act by mediating protein-protein interactions during germ cell maturation. This Rhinolophus ferrumequinum (Greater horseshoe bat) protein is Ankyrin repeat, SAM and basic leucine zipper domain-containing protein 1 (ASZ1).